The sequence spans 332 residues: Endo-1,4-beta-xylanase B (332 aa).

One can recognise a GH10 domain in the interval S2–Q331. E134 serves as the catalytic Proton donor. Catalysis depends on E241, which acts as the Nucleophile.

This sequence belongs to the glycosyl hydrolase 10 (cellulase F) family. Cytoplasmic xylanase subfamily.

The protein localises to the cytoplasm. The catalysed reaction is Endohydrolysis of (1-&gt;4)-beta-D-xylosidic linkages in xylans.. The protein operates within glycan degradation; xylan degradation. Its activity is regulated as follows. Completely inhibited by Ag(2+), Cu(2+), Hg(2+), Mn(2+), Pb(2+) and Sn(2+). Strongly inhibited by Fe(2+) and Zn(2+). Co(2+) and Ni(2+) cause little inhibition while Ca(2+) and Mg(2+) do not affect enzyme activity, and Ba(2+) produces a small stimulating effect. Irreversibly inactivated by SDS in vitro. Plays a role in plant xylan biodegradation, probably via the hydrolysis of short xylooligosaccharides resulting from extracellular xylan hydrolysis, once they have been transported inside cells. Shows similar activity on xylans of different rate of arabinose or methylglucuronic substitution. Also displays high activity on aryl-xylosides. Is active on xylotetraose and xylotriose, but does not hydrolyze xylobiose, indicating that XynB is a xylanase and not a beta-xylosidase. The protein is Endo-1,4-beta-xylanase B (xynB) of Paenibacillus barcinonensis.